A 288-amino-acid polypeptide reads, in one-letter code: Phenazine biosynthesis-like domain-containing protein 1 (288 aa).

Glu-46 is an active-site residue.

The protein belongs to the PhzF family.

The protein is Phenazine biosynthesis-like domain-containing protein 1 (Pbld1) of Mus musculus (Mouse).